A 308-amino-acid chain; its full sequence is Aspartate carbamoyltransferase catalytic subunit (308 aa).

Residues arginine 57 and threonine 58 each contribute to the carbamoyl phosphate site. Lysine 86 lines the L-aspartate pocket. Positions 107, 135, and 138 each coordinate carbamoyl phosphate. L-aspartate-binding residues include arginine 168 and arginine 228. Carbamoyl phosphate is bound by residues leucine 267 and proline 268.

Belongs to the aspartate/ornithine carbamoyltransferase superfamily. ATCase family. In terms of assembly, heterododecamer (2C3:3R2) of six catalytic PyrB chains organized as two trimers (C3), and six regulatory PyrI chains organized as three dimers (R2).

The catalysed reaction is carbamoyl phosphate + L-aspartate = N-carbamoyl-L-aspartate + phosphate + H(+). The protein operates within pyrimidine metabolism; UMP biosynthesis via de novo pathway; (S)-dihydroorotate from bicarbonate: step 2/3. Functionally, catalyzes the condensation of carbamoyl phosphate and aspartate to form carbamoyl aspartate and inorganic phosphate, the committed step in the de novo pyrimidine nucleotide biosynthesis pathway. The sequence is that of Aspartate carbamoyltransferase catalytic subunit from Leptospira interrogans serogroup Icterohaemorrhagiae serovar Lai (strain 56601).